The primary structure comprises 127 residues: Fluoride-specific ion channel FluC 1 (127 aa).

4 helical membrane-spanning segments follow: residues 4 to 24, 35 to 55, 71 to 91, and 101 to 121; these read TLLA…LVSL, VGTL…LALF, TGFC…VYLI, and GTIL…FILV. Na(+)-binding residues include glycine 75 and threonine 78.

This sequence belongs to the fluoride channel Fluc/FEX (TC 1.A.43) family.

It is found in the cell inner membrane. It catalyses the reaction fluoride(in) = fluoride(out). Its activity is regulated as follows. Na(+) is not transported, but it plays an essential structural role and its presence is essential for fluoride channel function. Functionally, fluoride-specific ion channel. Important for reducing fluoride concentration in the cell, thus reducing its toxicity. This is Fluoride-specific ion channel FluC 1 from Yersinia pseudotuberculosis serotype I (strain IP32953).